We begin with the raw amino-acid sequence, 275 residues long: Formamidopyrimidine-DNA glycosylase (275 aa).

Proline 2 serves as the catalytic Schiff-base intermediate with DNA. Residue glutamate 3 is the Proton donor of the active site. Catalysis depends on lysine 60, which acts as the Proton donor; for beta-elimination activity. DNA contacts are provided by histidine 93 and arginine 112. Residues 240-274 (FVYGRKDEPCKKCGSPIEKTVVGGRGTHFCIKCQK) form an FPG-type zinc finger. Arginine 264 (proton donor; for delta-elimination activity) is an active-site residue.

The protein belongs to the FPG family. As to quaternary structure, monomer. Zn(2+) is required as a cofactor.

It carries out the reaction Hydrolysis of DNA containing ring-opened 7-methylguanine residues, releasing 2,6-diamino-4-hydroxy-5-(N-methyl)formamidopyrimidine.. The catalysed reaction is 2'-deoxyribonucleotide-(2'-deoxyribose 5'-phosphate)-2'-deoxyribonucleotide-DNA = a 3'-end 2'-deoxyribonucleotide-(2,3-dehydro-2,3-deoxyribose 5'-phosphate)-DNA + a 5'-end 5'-phospho-2'-deoxyribonucleoside-DNA + H(+). Functionally, involved in base excision repair of DNA damaged by oxidation or by mutagenic agents. Acts as a DNA glycosylase that recognizes and removes damaged bases. Has a preference for oxidized purines, such as 7,8-dihydro-8-oxoguanine (8-oxoG). Has AP (apurinic/apyrimidinic) lyase activity and introduces nicks in the DNA strand. Cleaves the DNA backbone by beta-delta elimination to generate a single-strand break at the site of the removed base with both 3'- and 5'-phosphates. This chain is Formamidopyrimidine-DNA glycosylase, found in Bacillus licheniformis (strain ATCC 14580 / DSM 13 / JCM 2505 / CCUG 7422 / NBRC 12200 / NCIMB 9375 / NCTC 10341 / NRRL NRS-1264 / Gibson 46).